We begin with the raw amino-acid sequence, 231 residues long: Somatolactin (231 aa).

An N-terminal signal peptide occupies residues 1-24; sequence MLMFTAIQRGVWVALLWPHLLTAS. Disulfide bonds link C29/C39, C89/C205, and C222/C230. Residues N35 and N145 are each glycosylated (N-linked (GlcNAc...) asparagine).

This sequence belongs to the somatotropin/prolactin family. Pituitary gland.

Its subcellular location is the secreted. In Siganus guttatus (Orange-spotted spinefoot), this protein is Somatolactin.